Reading from the N-terminus, the 147-residue chain is Large ribosomal subunit protein uL15 (147 aa).

The span at 1-12 (MTLRLNDLKPAD) shows a compositional bias: basic and acidic residues. The disordered stretch occupies residues 1–61 (MTLRLNDLKP…GFEGGQTPMQ (61 aa)). Gly residues predominate over residues 23 to 33 (RGIGSGLGKTA). Over residues 34 to 47 (GRGHKGSFARKGGG) the composition is skewed to basic residues.

It belongs to the universal ribosomal protein uL15 family. Part of the 50S ribosomal subunit.

Binds to the 23S rRNA. The polypeptide is Large ribosomal subunit protein uL15 (Xanthomonas oryzae pv. oryzae (strain MAFF 311018)).